The primary structure comprises 167 residues: Signal peptidase complex subunit 2 (167 aa).

Topologically, residues 1-36 (MPKYNVSDFKSKFDKELTNHFNKNGYKQSFVFEDIR) are cytoplasmic. A helical transmembrane segment spans residues 37-57 (LLIAIACIIPAGLAFGIEYVY). The Lumenal segment spans residues 58-68 (GFGVLKSYLKY). The chain crosses the membrane as a helical span at residues 69 to 89 (LLPLYFLASCLLTFWSSVVKG). Residues 90–167 (STVYVATKKE…ISKYLSQIEN (78 aa)) lie on the Cytoplasmic side of the membrane.

This sequence belongs to the SPCS2 family. Component of the signal peptidase complex (SPC) composed of a catalytic subunit sec11 and three accessory subunits spc1, spc2 and spc3. The complex induces a local thinning of the ER membrane which is used to measure the length of the signal peptide (SP) h-region of protein substrates. This ensures the selectivity of the complex towards h-regions shorter than 18-20 amino acids. SPC associates with the translocon complex.

The protein resides in the endoplasmic reticulum membrane. In terms of biological role, component of the signal peptidase complex (SPC) which catalyzes the cleavage of N-terminal signal sequences from nascent proteins as they are translocated into the lumen of the endoplasmic reticulum. Enhances the enzymatic activity of SPC and facilitates the interactions between different components of the translocation site. The sequence is that of Signal peptidase complex subunit 2 (spc2) from Schizosaccharomyces pombe (strain 972 / ATCC 24843) (Fission yeast).